Consider the following 169-residue polypeptide: Large ribosomal subunit protein uL23 (169 aa).

A disordered region spans residues 1–20 (MAGKKVKSNTPKQDLSVSKS). The span at 8–20 (SNTPKQDLSVSKS) shows a compositional bias: polar residues.

The protein belongs to the universal ribosomal protein uL23 family.

Its function is as follows. This protein binds to a specific region on the 26S rRNA. This chain is Large ribosomal subunit protein uL23 (rpl23a), found in Dictyostelium discoideum (Social amoeba).